The following is a 658-amino-acid chain: Translation factor GUF1, mitochondrial (658 aa).

A mitochondrion-targeting transit peptide spans 1 to 40 (MRGCLQTVRWLTSAWQRPPSYPPLSRAAPCRFFNVSIPRN). The tr-type G domain maps to 60 to 240 (DRFRNFCIVA…TVVEQIPAPV (181 aa)). Residues 69 to 76 (AHVDHGKS), 133 to 137 (DTPGH), and 187 to 190 (NKVD) contribute to the GTP site.

This sequence belongs to the TRAFAC class translation factor GTPase superfamily. Classic translation factor GTPase family. LepA subfamily.

The protein localises to the mitochondrion inner membrane. The catalysed reaction is GTP + H2O = GDP + phosphate + H(+). Its function is as follows. Promotes mitochondrial protein synthesis. May act as a fidelity factor of the translation reaction, by catalyzing a one-codon backward translocation of tRNAs on improperly translocated ribosomes. Binds to mitochondrial ribosomes in a GTP-dependent manner. The sequence is that of Translation factor GUF1, mitochondrial from Paracoccidioides brasiliensis (strain Pb18).